A 227-amino-acid polypeptide reads, in one-letter code: Izumo sperm-egg fusion protein 4 (227 aa).

The N-terminal stretch at 1–24 (MFGQGRLGQAMALLLFLGMTAALA) is a signal peptide. 2 N-linked (GlcNAc...) asparagine glycosylation sites follow: N153 and N214.

It belongs to the Izumo family.

It is found in the secreted. This chain is Izumo sperm-egg fusion protein 4 (Izumo4), found in Mus musculus (Mouse).